We begin with the raw amino-acid sequence, 129 residues long: Glycine cleavage system H protein (129 aa).

One can recognise a Lipoyl-binding domain in the interval 24-106 (TYTVGITEHA…YAGGWIFKIK (83 aa)). Lys65 carries the N6-lipoyllysine modification.

The protein belongs to the GcvH family. The glycine cleavage system is composed of four proteins: P, T, L and H. (R)-lipoate serves as cofactor.

The glycine cleavage system catalyzes the degradation of glycine. The H protein shuttles the methylamine group of glycine from the P protein to the T protein. This is Glycine cleavage system H protein from Escherichia coli O45:K1 (strain S88 / ExPEC).